A 172-amino-acid polypeptide reads, in one-letter code: Glutamyl-tRNA(Gln) amidotransferase subunit C-4, mitochondrial (172 aa).

The transit peptide at 1 to 23 directs the protein to the mitochondrion; sequence MIRIPFHLRQTPGRTLHSLVRSF. The disordered stretch occupies residues 51 to 73; it reads PSKVPQRPHKSTIDGQSTPTRIP.

Belongs to the GatC family. In terms of assembly, subunit of the heterotrimeric GatCAB amidotransferase (AdT) complex, composed of A, B and C subunits.

The protein localises to the mitochondrion. It catalyses the reaction L-glutamyl-tRNA(Gln) + L-glutamine + ATP + H2O = L-glutaminyl-tRNA(Gln) + L-glutamate + ADP + phosphate + H(+). Allows the formation of correctly charged Gln-tRNA(Gln) through the transamidation of misacylated Glu-tRNA(Gln) in the mitochondria. The reaction takes place in the presence of glutamine and ATP through an activated gamma-phospho-Glu-tRNA(Gln). The sequence is that of Glutamyl-tRNA(Gln) amidotransferase subunit C-4, mitochondrial from Culex quinquefasciatus (Southern house mosquito).